Consider the following 224-residue polypeptide: UPF0758 protein LCA_0852 (224 aa).

The 123-residue stretch at 100–222 (VVASSQMVGQ…YLSLREEGYL (123 aa)) folds into the MPN domain. The Zn(2+) site is built by His-171, His-173, and Asp-184. Residues 171–184 (HNHPSGQLAPSTQD) carry the JAMM motif motif.

Belongs to the UPF0758 family.

This Latilactobacillus sakei subsp. sakei (strain 23K) (Lactobacillus sakei subsp. sakei) protein is UPF0758 protein LCA_0852.